The chain runs to 106 residues: Nucleoid-associated protein Nham_0463 (106 aa).

The protein belongs to the YbaB/EbfC family. As to quaternary structure, homodimer.

Its subcellular location is the cytoplasm. The protein resides in the nucleoid. Functionally, binds to DNA and alters its conformation. May be involved in regulation of gene expression, nucleoid organization and DNA protection. The protein is Nucleoid-associated protein Nham_0463 of Nitrobacter hamburgensis (strain DSM 10229 / NCIMB 13809 / X14).